The primary structure comprises 309 residues: Ribonuclease Z (309 aa).

Zn(2+) contacts are provided by histidine 63, histidine 65, aspartate 67, histidine 68, histidine 145, aspartate 216, and histidine 274. The active-site Proton acceptor is the aspartate 67.

It belongs to the RNase Z family. Homodimer. Zn(2+) serves as cofactor.

It catalyses the reaction Endonucleolytic cleavage of RNA, removing extra 3' nucleotides from tRNA precursor, generating 3' termini of tRNAs. A 3'-hydroxy group is left at the tRNA terminus and a 5'-phosphoryl group is left at the trailer molecule.. Its function is as follows. Zinc phosphodiesterase, which displays some tRNA 3'-processing endonuclease activity. Probably involved in tRNA maturation, by removing a 3'-trailer from precursor tRNA. The protein is Ribonuclease Z of Streptococcus pyogenes serotype M6 (strain ATCC BAA-946 / MGAS10394).